The following is a 132-amino-acid chain: Fibroblast growth factor 1 (132 aa).

Residues N10 and 108-120 (KTKPGSRTHFGQK) each bind heparin.

The protein belongs to the heparin-binding growth factors family.

It localises to the secreted. The protein resides in the cytoplasm. The protein localises to the cell cortex. Its subcellular location is the cytosol. It is found in the nucleus. In terms of biological role, plays an important role in the regulation of cell survival, cell division, angiogenesis, cell differentiation and cell migration. Functions as a potent mitogen in vitro. Acts as a ligand for FGFR1 and integrins. Binds to FGFR1 in the presence of heparin leading to FGFR1 dimerization and activation via sequential autophosphorylation on tyrosine residues which act as docking sites for interacting proteins, leading to the activation of several signaling cascades. Binds to integrins. Its binding to integrins and subsequent ternary complex formation with integrins and FGFR1 are essential for FGF1 signaling. This Notophthalmus viridescens (Eastern newt) protein is Fibroblast growth factor 1 (fgf1).